A 282-amino-acid chain; its full sequence is Protease HtpX homolog (282 aa).

The next 2 membrane-spanning stretches (helical) occupy residues 6 to 26 and 29 to 49; these read TLVL…LIGG and GATF…FFSH. H130 is a binding site for Zn(2+). The active site involves E131. H134 lines the Zn(2+) pocket. 2 helical membrane passes run 140–160 and 180–200; these read ILIS…AQMA and IVAL…QLAI. A Zn(2+)-binding site is contributed by E205.

The protein belongs to the peptidase M48B family. The cofactor is Zn(2+).

It is found in the cell inner membrane. This chain is Protease HtpX homolog, found in Thermodesulfovibrio yellowstonii (strain ATCC 51303 / DSM 11347 / YP87).